We begin with the raw amino-acid sequence, 302 residues long: Glycine--tRNA ligase alpha subunit (302 aa).

The protein belongs to the class-II aminoacyl-tRNA synthetase family. As to quaternary structure, tetramer of two alpha and two beta subunits.

The protein resides in the cytoplasm. The catalysed reaction is tRNA(Gly) + glycine + ATP = glycyl-tRNA(Gly) + AMP + diphosphate. This is Glycine--tRNA ligase alpha subunit from Haemophilus influenzae (strain 86-028NP).